Here is a 1416-residue protein sequence, read N- to C-terminus: MNIYLRQNSFLVPDFIAVQRNSFSQFLESGLIQEISKRNPITNSTKELELCFYPQYYKLSPPELNAKQSILKNKTYSCRLYIPVKLTNKRTKTLKLQWVVLGNLPLMTKRGHFIINGSPRVIINQMVRSPGVYFKEVSHADQKLTYYADLIAYRGAWLRIELDKKADIWARMKKTPKLPMLILLQALGLNLPTILKSLNYPKFFENLGHDGNFMKQLKKGRVSSRSSSQELSGSFNLSEDVSLRLDDSSKNMGAENVQRAPLQKSTKKATLFGDFSRSSVYCKTQEEALWALYALTHPLKNPDEVTANLGKSFLYRKFMNSRVYDLSPLGRLRLNQKLNLSVNENITTITAQDLLFITNTLINLNYGVGKVDDIDNLKNRRIRTAGELVQNQFGIGLLRLEKIIREKLKQQQTKLSIGSLINTKPINGALREFFGSSPLSQFMDQTNPLAEITHKRRLSSLGPGGVNRETAGMAIRGIHPTHYGRICPIETPEGQNAGLVNSLTIYSRVNPYGFIETPFYKVVKGQVQNSTRPIFFSAYQEEKKLLAPGDIYANKLKYLPKSELPIRKLAEFTRTTREKIDYISVSPLQMISIATSLIPFLEHDDANRALMGSNMQRQAVPLMTAEAPVVGTGLECRVASDSGHVLQAKKSGFVTYSSAEKITILSPVDSTPAVPKLSKGNNSPQHFHESVGGSCKESQSLQAAAEGYLSGVASSSSSKFTGSSFSTISALNDGVLRRALTQKVLTTGTNCSSMLKNQRFFVEPKAQLYTGAQTPVGRVETILQPNHAEGYLSEVETIQQTQNKLPLQVRFGVEAPKSSFDSEATKISSTLNSIPQHPVLGEDSPSKQVGWALKDPQIQTMLKPKWHHSAQTMSRENWYQNLKGQNVKTFTQVESGRLVTKPTNTKMPMSSLAGTANSKKTGEALYKLASSESATKSMDFSTKTQLKPITYELQKLFRSNQDTSIMHRPVVREGEWVNRGDLLADNSTTVGGELSLGKNLLLAYMPWEGYNFEDAILISERLVSDDAYTSLHIERYEVEIRETKFGLEQITSQIPDEGKLSHLDHFGIAKPGTWVEEGDILIGKVAPMPQKNLSRYEKLLYDVVGKKISTTRDTSLRVPRGVSGRVIHVEILNAENLPPEFVFEGPSRVNLYIAEKRKIHVGDKMAGRHGNKGIISNILPRQDMPYLPDGTPLDMVLNPLGVPSRMNVGQIYECLLGLAGRYLGQKFKVRPFDEIYGPQTSRSLVYSKLYEARLRTGQRWLFNPASPGKTRLFDGRTGECFSQPVTVGQAYMLKLIHLVDEKIHARSIGPYSLVTQQPLRGRSKHGGQRLGEMEVWALEGFGAAYTLQELLTVKSDDIKGREQVMESIQKNKTISLGTPESFKVLIRELQSLCLDVGVYAVDGSGKIKQVDTMKLP.

This sequence belongs to the RNA polymerase beta chain family. As to quaternary structure, in plastids the minimal PEP RNA polymerase catalytic core is composed of four subunits: alpha, beta, beta', and beta''. When a (nuclear-encoded) sigma factor is associated with the core the holoenzyme is formed, which can initiate transcription.

The protein resides in the plastid. The protein localises to the chloroplast. The enzyme catalyses RNA(n) + a ribonucleoside 5'-triphosphate = RNA(n+1) + diphosphate. Its function is as follows. DNA-dependent RNA polymerase catalyzes the transcription of DNA into RNA using the four ribonucleoside triphosphates as substrates. The sequence is that of DNA-directed RNA polymerase subunit beta from Oltmannsiellopsis viridis (Marine flagellate).